The sequence spans 174 residues: tRNA (cytidine(56)-2'-O)-methyltransferase (174 aa).

Residues L80, 105-109, and 123-130 each bind S-adenosyl-L-methionine; these read GAEKV and ISNQPHSE.

Belongs to the aTrm56 family. As to quaternary structure, homodimer.

It localises to the cytoplasm. The enzyme catalyses cytidine(56) in tRNA + S-adenosyl-L-methionine = 2'-O-methylcytidine(56) in tRNA + S-adenosyl-L-homocysteine + H(+). In terms of biological role, specifically catalyzes the AdoMet-dependent 2'-O-ribose methylation of cytidine at position 56 in tRNAs. This Metallosphaera sedula (strain ATCC 51363 / DSM 5348 / JCM 9185 / NBRC 15509 / TH2) protein is tRNA (cytidine(56)-2'-O)-methyltransferase.